Consider the following 767-residue polypeptide: Transferrin receptor protein 1 (767 aa).

The Cytoplasmic portion of the chain corresponds to 1-67 (MDQARSAFSN…LTKPKRFNGS (67 aa)). A phosphoserine mark is found at Ser-9 and Ser-18. Tyr-19 is subject to Phosphotyrosine. An Endocytosis signal motif is present at residues 19-22 (YTRF). Residue Thr-20 is modified to Phosphothreonine. Ser-23 bears the Phosphoserine mark. A Stop-transfer sequence motif is present at residues 60-63 (KPKR). A helical; Signal-anchor for type II membrane protein transmembrane segment spans residues 68–88 (FCYAVIAVIIFFLIGFMIGYL). Residue Cys-69 is the site of S-palmitoyl cysteine attachment. Residues 89–767 (GYCKRVEPKS…GDIWDIDNEF (679 aa)) lie on the Extracellular side of the membrane. A compositionally biased stretch (basic and acidic residues) spans 96-110 (PKSECGRSGDSKEIE). Residues 96-122 (PKSECGRSGDSKEIEGTEPPETEEYFP) are disordered. Acidic residues predominate over residues 111 to 121 (GTEPPETEEYF). Asn-211, Asn-258, and Asn-324 each carry an N-linked (GlcNAc...) asparagine glycan. In terms of domain architecture, PA spans 230–320 (SKATTVTGKL…GTGDPYTPGF (91 aa)). The tract at residues 576–767 (TMDTYEVLSQ…GDIWDIDNEF (192 aa)) is ligand-binding. Residues 653-655 (RGD) carry the Cell attachment site motif. Asn-734 is a glycosylation site (N-linked (GlcNAc...) asparagine).

Belongs to the peptidase M28 family. M28B subfamily. As to quaternary structure, homodimer; disulfide-linked. Binds one transferrin or HFE molecule per subunit. Interacts with SH3BP4. Interacts with STEAP3; facilitates TFRC endocytosis in erythroid precursor cells. Post-translationally, stearoylated by ZDHHC6 which inhibits TFRC-mediated activation of the JNK pathway and promotes mitochondrial fragmentation. Stearoylation does not affect iron uptake.

Its subcellular location is the cell membrane. It localises to the melanosome. Its function is as follows. Cellular uptake of iron occurs via receptor-mediated endocytosis of ligand-occupied transferrin receptor into specialized endosomes. Endosomal acidification leads to iron release. The apotransferrin-receptor complex is then recycled to the cell surface with a return to neutral pH and the concomitant loss of affinity of apotransferrin for its receptor. Transferrin receptor is necessary for development of erythrocytes and the nervous system. Positively regulates T and B cell proliferation through iron uptake. Acts as a lipid sensor that regulates mitochondrial fusion by regulating activation of the JNK pathway. When dietary levels of stearate (C18:0) are low, promotes activation of the JNK pathway, resulting in HUWE1-mediated ubiquitination and subsequent degradation of the mitofusin MFN2 and inhibition of mitochondrial fusion. When dietary levels of stearate (C18:0) are high, TFRC stearoylation inhibits activation of the JNK pathway and thus degradation of the mitofusin MFN2. Mediates uptake of NICOL1 into fibroblasts where it may regulate extracellular matrix production. The chain is Transferrin receptor protein 1 (TFRC) from Equus caballus (Horse).